A 197-amino-acid polypeptide reads, in one-letter code: Dephospho-CoA kinase (197 aa).

The DPCK domain maps to 2-197 (IVGLTGGIAS…YQQILSLNAA (196 aa)). ATP is bound at residue 10–15 (ASGKTL).

The protein belongs to the CoaE family.

It localises to the cytoplasm. The catalysed reaction is 3'-dephospho-CoA + ATP = ADP + CoA + H(+). Its pathway is cofactor biosynthesis; coenzyme A biosynthesis; CoA from (R)-pantothenate: step 5/5. Catalyzes the phosphorylation of the 3'-hydroxyl group of dephosphocoenzyme A to form coenzyme A. This Dichelobacter nodosus (Bacteroides nodosus) protein is Dephospho-CoA kinase.